The sequence spans 376 residues: Carbamoyl phosphate synthase small chain (376 aa).

The tract at residues 1–187 (MKALLALEDG…KEDGSFLWKQ (187 aa)) is CPSase. Residues Ser45, Gly239, and Gly241 each contribute to the L-glutamine site. Positions 189–376 (KIPLIVYDYG…KEVVLLKLGC (188 aa)) constitute a Glutamine amidotransferase type-1 domain. The Nucleophile role is filled by Cys266. The L-glutamine site is built by Leu267, Gln270, Asn308, Gly310, and Phe311. Residues His349 and Glu351 contribute to the active site.

The protein belongs to the CarA family. As to quaternary structure, composed of two chains; the small (or glutamine) chain promotes the hydrolysis of glutamine to ammonia, which is used by the large (or ammonia) chain to synthesize carbamoyl phosphate. Tetramer of heterodimers (alpha,beta)4.

The enzyme catalyses hydrogencarbonate + L-glutamine + 2 ATP + H2O = carbamoyl phosphate + L-glutamate + 2 ADP + phosphate + 2 H(+). It carries out the reaction L-glutamine + H2O = L-glutamate + NH4(+). The protein operates within amino-acid biosynthesis; L-arginine biosynthesis; carbamoyl phosphate from bicarbonate: step 1/1. It participates in pyrimidine metabolism; UMP biosynthesis via de novo pathway; (S)-dihydroorotate from bicarbonate: step 1/3. In terms of biological role, small subunit of the glutamine-dependent carbamoyl phosphate synthetase (CPSase). CPSase catalyzes the formation of carbamoyl phosphate from the ammonia moiety of glutamine, carbonate, and phosphate donated by ATP, constituting the first step of 2 biosynthetic pathways, one leading to arginine and/or urea and the other to pyrimidine nucleotides. The small subunit (glutamine amidotransferase) binds and cleaves glutamine to supply the large subunit with the substrate ammonia. The chain is Carbamoyl phosphate synthase small chain from Lawsonia intracellularis (strain PHE/MN1-00).